The chain runs to 341 residues: Diguanylate cyclase DgcP (341 aa).

Residues 18 to 154 (SLESLVRQLL…LFAGLIAQYI (137 aa)) form the GAF domain. Residues 204–337 (HKIMIAFIDL…KQKTPFVAHP (134 aa)) enclose the GGDEF domain. D212 is a binding site for Mg(2+). 3 residues coordinate substrate: N220, H225, and D229. D255 serves as a coordination point for Mg(2+). The Proton acceptor role is filled by D255.

As to quaternary structure, homodimer. The cofactor is Mg(2+).

The catalysed reaction is 2 GTP = 3',3'-c-di-GMP + 2 diphosphate. It participates in purine metabolism; 3',5'-cyclic di-GMP biosynthesis. Functionally, catalyzes the synthesis of cyclic-di-GMP (c-di-GMP) via the condensation of 2 GTP molecules. Cyclic-di-GMP is a second messenger which controls cell surface-associated traits in bacteria. The sequence is that of Diguanylate cyclase DgcP from Escherichia coli (strain K12).